An 819-amino-acid polypeptide reads, in one-letter code: Sulfate permease 2 (819 aa).

A glycan (N-linked (GlcNAc...) asparagine) is linked at asparagine 24. 10 helical membrane-spanning segments follow: residues 72-92, 104-124, 129-149, 172-192, 194-214, 273-293, 328-348, 365-385, 454-474, and 477-497; these read YNLTWLLGDFIAGVTVGFVVV, LAPEYGLYTSFVGFVLYWAFA, ITIGAVAVMSTIVGNIIANVQ, LLFLGLIRFGFIVEFIPIVAI, AFMTGSAISIAAGQVSTLMGI, FFVSTLRMVFIIILYILVSWL, ILSAISGDIPTTILVLLIEHI, SQELVAIGFTNLLGPFLGGYP, FWLTSPLEVVIFFAGVFVSIF, and IENGIYVTVAASGAVLLWRIA. The 158-residue stretch at 551–708 folds into the STAS domain; that stretch reads ELQISTPWPG…ENHKGGVQEV (158 aa). N-linked (GlcNAc...) asparagine glycosylation occurs at asparagine 581. A disordered region spans residues 726–766; the sequence is EAVPVGTSGSGSTDEKRPEGEGGATNGGMEKGSANGEDIST. A compositionally biased stretch (gly residues) spans 746–755; sequence EGGATNGGME.

This sequence belongs to the SLC26A/SulP transporter (TC 2.A.53) family. In terms of tissue distribution, mainly found in mycelia.

The protein localises to the membrane. In terms of biological role, uptake of sulfate into the cell. The protein is Sulfate permease 2 (cys-14) of Neurospora crassa (strain ATCC 24698 / 74-OR23-1A / CBS 708.71 / DSM 1257 / FGSC 987).